Reading from the N-terminus, the 928-residue chain is G-protein coupled receptor family C group 6 member A (928 aa).

A signal peptide spans 1 to 20 (MALLITVVTCFMIILDTSQS). The Extracellular segment spans residues 21 to 594 (CHTPDDFVAI…EYLDWDDSLA (574 aa)). N-linked (GlcNAc...) asparagine glycans are attached at residues Asn-332, Asn-555, and Asn-567. The chain crosses the membrane as a helical span at residues 595 to 615 (LLLIALSLLGIAFVLAIGIIF). The Cytoplasmic segment spans residues 616 to 630 (TRNLKTPVVKSSGGL). Residues 631 to 651 (VVCYVMLICHALNFASTGFFI) form a helical membrane-spanning segment. Residues 652-669 (GEPQDFACKTRQTLFGVS) are Extracellular-facing. The helical transmembrane segment at 670–690 (FTLCVSCILTKSLKILLAFSF) threads the bilayer. Residues 691 to 706 (DPKLTMFLKCLYRPVP) are Cytoplasmic-facing. Residues 707–727 (IVLTCTGIQVVICTLWLVLAA) form a helical membrane-spanning segment. The Extracellular segment spans residues 728 to 750 (PSVEENISLPRVIILECEEGSAL). Residues 751–771 (AFGTMLGYITVLAFICFVFAF) form a helical membrane-spanning segment. Over 772 to 784 (KGRKLPENYNEAK) the chain is Cytoplasmic. Residues 785–805 (FLTFGMLIYFIAWITFIPVYT) form a helical membrane-spanning segment. The Extracellular segment spans residues 806 to 812 (TTFGKYL). A helical transmembrane segment spans residues 813 to 833 (PAVEIIVILISNYGILCCIFF). At 834–928 (PKCYIILCKQ…TLRQKRSSSI (95 aa)) the chain is on the cytoplasmic side.

Belongs to the G-protein coupled receptor 3 family. Homodimer; disulfide-linked. In terms of processing, N-glycosylated. Expressed at high level in liver, lung, spleen and heart. Expressed at lower level in kidney, skeletal muscle and brain. Expressed in 7 dpc, 11 dpc, 15 dpc and 17 dpc embryos.

It localises to the cell membrane. Its function is as follows. Receptor activated by multiple ligands, including osteocalcin (BGLAP), basic amino acids, and various cations. Activated by amino acids with a preference for basic amino acids such as L-Lys, L-Arg and L-ornithine but also by small and polar amino acids. The L-alpha amino acids respond is augmented by divalent cations Ca(2+) and Mg(2+). Seems to act through a G(q)/G(11) and G(i)-coupled pathway. Regulates testosterone production by acting as a ligand for uncarboxylated osteocalcin hormone: osteocalcin-binding at the surface of Leydig cells initiates a signaling response that promotes the expression of enzymes required for testosterone synthesis in a CREB-dependent manner. Mediates the non-genomic effects of androgens in multiple tissue. May coordinate nutritional and hormonal anabolic signals through the sensing of extracellular amino acids, osteocalcin, divalent ions and its responsiveness to anabolic steroids. The polypeptide is G-protein coupled receptor family C group 6 member A (Gprc6a) (Mus musculus (Mouse)).